The following is a 148-amino-acid chain: Pivalyl-CoA mutase small subunit (148 aa).

The B12-binding domain occupies 8–138 (PLRVLVTKIG…TALGQKSRAE (131 aa)). H21 contributes to the adenosylcob(III)alamin binding site.

This sequence belongs to the acyl-CoA mutase small subunit family. In terms of assembly, monomer in the absence of the PCM large subunit. Weakly interacts with the PCM large subunit; an alpha(2)beta(2) stoichiometry seems to represent the active state of the enzyme. It depends on adenosylcob(III)alamin as a cofactor.

It carries out the reaction 3-methylbutanoyl-CoA = 2,2-dimethylpropanoyl-CoA. Together with Xaut_5043, catalyzes the reversible isomerization between pivalyl-CoA and isovaleryl-CoA, using radical chemistry. Does not exhibit isobutyryl-CoA mutase (ICM) activity. The chain is Pivalyl-CoA mutase small subunit from Xanthobacter autotrophicus (strain ATCC BAA-1158 / Py2).